Consider the following 637-residue polypeptide: MDEADGIILITLKDLGCEIEENETIKNFDSEMVYKCILAYLRVINEQKVINLTNTLPKNMSARVNACSLIANIIKDSGYRSELSYHNLLYPNVNDIRKIFIFLGQLLPKKEVESGGVSIQKLEDQICQYLQGCVKESWIPYFCPFSKRIPGNYSTATLFTTTGGNLRIPSRGRQLKVTPGLEQYYSQYLEPLTLQTNRFEDIAPSVFEYNLSIYAEAQERDNEWNDKGVSSGMNPIDYRKNKQKQVLSKMNDSIRQSIIDGGNNQISSNCNSGDSFLDIISEFRGNSLDVGGQFNRKKAFTNELNNNNNNNNDSTTNTNKVETEIETEEQRQLKRQAEIDALQSQIDEISESIQLHNKEMLDFLSLMRQSESENLEQDQQREVLEKQYKIKKKTFSLLDDAEGNMKELQSLCNQTSSNLLEMSGEWEKVRKPIIEKYRSLKDKQNNQADETKSKLDRIKEMRILIKKLVSEVQQKDDQFQQLQDQYKQAPKDSNRSQYTRRILETVKNIKKQKVDIDKVLLDTKNLQKEINTITDTAVRTFELVKDLLYNDAKKDQTAKQAIKSFAIIDDKFQKLFKTIDETGNFQNNILNLNSKIEHVSQKTNTLNSDRVVQDLKNIKSENQSLIKQIKTLIETKN.

Coiled coils occupy residues 322-489 and 608-637; these read ETEI…YKQA and SDRV…ETKN.

It belongs to the CCDC22 family.

The polypeptide is Coiled-coil domain-containing protein 22 homolog (Dictyostelium discoideum (Social amoeba)).